Reading from the N-terminus, the 290-residue chain is 2-dehydro-3-deoxyphosphooctonate aldolase 1 (290 aa).

Alanine 2 is subject to N-acetylalanine.

It belongs to the KdsA family. In terms of tissue distribution, expressed in shoots.

The protein localises to the cytoplasm. It catalyses the reaction D-arabinose 5-phosphate + phosphoenolpyruvate + H2O = 3-deoxy-alpha-D-manno-2-octulosonate-8-phosphate + phosphate. Functionally, catalyzes the stereospecific condensation of D-arabinose 5-phosphate and phosphoenolpyruvate to form 3-deoxy-D-manno-octulosonate 8-phosphate (KDO-8-phosphate) and inorganic phosphate. Involved in the biosynthesis of 3-deoxy-D-manno-octulosonate (KDO) which is an indispensable component of rhamnogalacturonan II (RG-II), a structurally complex pectic polysaccharide of the primary cell wall. RG-II is essential for the cell wall integrity of rapidly growing tissues and pollen tube growth and elongation. The sequence is that of 2-dehydro-3-deoxyphosphooctonate aldolase 1 (KDSA1) from Arabidopsis thaliana (Mouse-ear cress).